The primary structure comprises 670 residues: Probable membrane-anchored ferredoxin csal_0991 (670 aa).

Transmembrane regions (helical) follow at residues 2–22 (LDIL…IGAV), 68–90 (VATA…LGLA), 94–113 (LGWL…LFVA), 135–155 (LMAF…VLPA), and 159–179 (GWLV…ELVF). 4Fe-4S ferredoxin-type domains lie at 241 to 271 (WNQL…PLNP) and 316 to 347 (GTAL…HVDA). Residues cysteine 250, cysteine 253, cysteine 256, cysteine 260, cysteine 328, cysteine 331, cysteine 334, and cysteine 338 each coordinate [4Fe-4S] cluster. The interval 648-670 (NTPPATPASHDTAASQATEEVLS) is disordered. The segment covering 659 to 670 (TAASQATEEVLS) has biased composition (polar residues).

Requires [4Fe-4S] cluster as cofactor.

It is found in the cell inner membrane. In terms of biological role, participates in the electron transfer process during N,N-dimethylglycine (DMG) degradation to sarcosine. Probably transfers the electrons from N,N-dimethylglycine/sarcosine dehydrogenase (DMGDH) to the electron transfer flavoprotein (ETF) EtfA-EtfB. In Chromohalobacter salexigens (strain ATCC BAA-138 / DSM 3043 / CIP 106854 / NCIMB 13768 / 1H11), this protein is Probable membrane-anchored ferredoxin csal_0991.